Here is a 374-residue protein sequence, read N- to C-terminus: Queuine tRNA-ribosyltransferase (374 aa).

Residue Asp89 is the Proton acceptor of the active site. Residues 89 to 93 (DSGGF), Asp143, Gln187, and Gly214 each bind substrate. Residues 245–251 (GVGKPED) are RNA binding. Catalysis depends on Asp264, which acts as the Nucleophile. Positions 269–273 (TRNAR) are RNA binding; important for wobble base 34 recognition. Residues Cys302, Cys304, Cys307, and His333 each contribute to the Zn(2+) site.

It belongs to the queuine tRNA-ribosyltransferase family. Homodimer. Within each dimer, one monomer is responsible for RNA recognition and catalysis, while the other monomer binds to the replacement base PreQ1. The cofactor is Zn(2+).

It catalyses the reaction 7-aminomethyl-7-carbaguanine + guanosine(34) in tRNA = 7-aminomethyl-7-carbaguanosine(34) in tRNA + guanine. Its pathway is tRNA modification; tRNA-queuosine biosynthesis. Its function is as follows. Catalyzes the base-exchange of a guanine (G) residue with the queuine precursor 7-aminomethyl-7-deazaguanine (PreQ1) at position 34 (anticodon wobble position) in tRNAs with GU(N) anticodons (tRNA-Asp, -Asn, -His and -Tyr). Catalysis occurs through a double-displacement mechanism. The nucleophile active site attacks the C1' of nucleotide 34 to detach the guanine base from the RNA, forming a covalent enzyme-RNA intermediate. The proton acceptor active site deprotonates the incoming PreQ1, allowing a nucleophilic attack on the C1' of the ribose to form the product. After dissociation, two additional enzymatic reactions on the tRNA convert PreQ1 to queuine (Q), resulting in the hypermodified nucleoside queuosine (7-(((4,5-cis-dihydroxy-2-cyclopenten-1-yl)amino)methyl)-7-deazaguanosine). This is Queuine tRNA-ribosyltransferase from Shewanella loihica (strain ATCC BAA-1088 / PV-4).